A 327-amino-acid chain; its full sequence is Probable cell division protein WhiA (327 aa).

A DNA-binding region (H-T-H motif) is located at residues 275-308 (SLEELGRLADPQMTKDAVAGRIRRLLTTADKRAR).

It belongs to the WhiA family.

Involved in cell division and chromosome segregation. This is Probable cell division protein WhiA from Corynebacterium efficiens (strain DSM 44549 / YS-314 / AJ 12310 / JCM 11189 / NBRC 100395).